We begin with the raw amino-acid sequence, 390 residues long: NADH-dependent butanol dehydrogenase B (390 aa).

Belongs to the iron-containing alcohol dehydrogenase family. In terms of assembly, homodimer.

The protein operates within alcohol metabolism; butanol biosynthesis. This is NADH-dependent butanol dehydrogenase B (bdhB) from Clostridium acetobutylicum (strain ATCC 824 / DSM 792 / JCM 1419 / IAM 19013 / LMG 5710 / NBRC 13948 / NRRL B-527 / VKM B-1787 / 2291 / W).